The chain runs to 245 residues: Biosynthetic peptidoglycan transglycosylase (245 aa).

A helical membrane pass occupies residues 24 to 44 (LVVIGAWLAGILLFSFLPVPF).

The protein belongs to the glycosyltransferase 51 family.

It localises to the cell inner membrane. It carries out the reaction [GlcNAc-(1-&gt;4)-Mur2Ac(oyl-L-Ala-gamma-D-Glu-L-Lys-D-Ala-D-Ala)](n)-di-trans,octa-cis-undecaprenyl diphosphate + beta-D-GlcNAc-(1-&gt;4)-Mur2Ac(oyl-L-Ala-gamma-D-Glu-L-Lys-D-Ala-D-Ala)-di-trans,octa-cis-undecaprenyl diphosphate = [GlcNAc-(1-&gt;4)-Mur2Ac(oyl-L-Ala-gamma-D-Glu-L-Lys-D-Ala-D-Ala)](n+1)-di-trans,octa-cis-undecaprenyl diphosphate + di-trans,octa-cis-undecaprenyl diphosphate + H(+). It participates in cell wall biogenesis; peptidoglycan biosynthesis. Peptidoglycan polymerase that catalyzes glycan chain elongation from lipid-linked precursors. The polypeptide is Biosynthetic peptidoglycan transglycosylase (Pectobacterium atrosepticum (strain SCRI 1043 / ATCC BAA-672) (Erwinia carotovora subsp. atroseptica)).